Here is a 64-residue protein sequence, read N- to C-terminus: Large ribosomal subunit protein bL35 (64 aa).

Residues 1-21 (MPKMKTNRGAAKRFKVKKSGK) form a disordered region. Residues 10–21 (AAKRFKVKKSGK) show a composition bias toward basic residues.

This sequence belongs to the bacterial ribosomal protein bL35 family.

This Nautilia profundicola (strain ATCC BAA-1463 / DSM 18972 / AmH) protein is Large ribosomal subunit protein bL35.